The primary structure comprises 228 residues: Ribosomal RNA small subunit methyltransferase G (228 aa).

Residues Gly-82, Leu-87, 105-107, 133-134, and Arg-147 each bind S-adenosyl-L-methionine; these read DAT and VE.

Belongs to the methyltransferase superfamily. RNA methyltransferase RsmG family.

It is found in the cytoplasm. Its function is as follows. Specifically methylates the N7 position of a guanine in 16S rRNA. This chain is Ribosomal RNA small subunit methyltransferase G, found in Pelodictyon phaeoclathratiforme (strain DSM 5477 / BU-1).